A 319-amino-acid chain; its full sequence is NADH-quinone oxidoreductase subunit H 1 (319 aa).

The next 8 helical transmembrane spans lie at Met1–Val21, Phe74–Ile94, Val107–Ala127, Leu147–Leu167, Val179–Ala199, Val238–Leu258, Ile262–Leu282, and Phe293–Val313.

Belongs to the complex I subunit 1 family. NDH-1 is composed of 14 different subunits. Subunits NuoA, H, J, K, L, M, N constitute the membrane sector of the complex.

It is found in the cell inner membrane. The enzyme catalyses a quinone + NADH + 5 H(+)(in) = a quinol + NAD(+) + 4 H(+)(out). In terms of biological role, NDH-1 shuttles electrons from NADH, via FMN and iron-sulfur (Fe-S) centers, to quinones in the respiratory chain. The immediate electron acceptor for the enzyme in this species is believed to be ubiquinone. Couples the redox reaction to proton translocation (for every two electrons transferred, four hydrogen ions are translocated across the cytoplasmic membrane), and thus conserves the redox energy in a proton gradient. This subunit may bind ubiquinone. The polypeptide is NADH-quinone oxidoreductase subunit H 1 (Rhodopseudomonas palustris (strain BisB5)).